Consider the following 820-residue polypeptide: Mediator of RNA polymerase II transcription subunit 16 (820 aa).

3 WD repeats span residues 74–114 (SNKY…SEWK), 621–665 (RSFM…PVFS), and 757–811 (SNDN…KCRC).

This sequence belongs to the Mediator complex subunit 16 family. As to quaternary structure, component of the Mediator complex.

It localises to the nucleus. Component of the Mediator complex, a coactivator involved in the regulated transcription of nearly all RNA polymerase II-dependent genes. Mediator functions as a bridge to convey information from gene-specific regulatory proteins to the basal RNA polymerase II transcription machinery. Mediator is recruited to promoters by direct interactions with regulatory proteins and serves as a scaffold for the assembly of a functional preinitiation complex with RNA polymerase II and the general transcription factors. The polypeptide is Mediator of RNA polymerase II transcription subunit 16 (MED16) (Aedes aegypti (Yellowfever mosquito)).